Here is a 742-residue protein sequence, read N- to C-terminus: Feeding circuit activating peptides (742 aa).

Residues 1–22 (MTFAASFRALLCVLFCAALVHC) form the signal peptide. The propeptide occupies 23–98 (KTRTKRYVPH…YGALADRDVD (76 aa)). Residues 117-131 (GSLDAIPQDTDASSD) constitute a propeptide, connecting peptide. 20 propeptides span residues 164–168 (GSGAE), 202–220 (RGTGGQMHASSPRVVPWGS), 236–253 (DTELVENRQTTGQQTEVN), 271–275 (SGEAG), 293–297 (ADDQG), 315–321 (FDNSAGE), 339–341 (AGD), 359–366 (FDNDISGQ), 384–388 (SDQDN), 406–410 (ADDDG), 428–432 (ADEDD), 450–454 (GDEDD), 472–476 (ADEDD), 494–498 (SDEDD), 516–520 (SDEDD), 538–542 (ADEDD), 560–564 (NSPGL), 582–592 (NNEYYSGAENE), 610–614 (DQPGE), and 647–742 (NSAD…AGQM).

Expressed in pleural, pedal, abdominal, buccal and cerebral ganglia.

It is found in the secreted. Its function is as follows. Initiates organized rhythmic motor output of feeding circuit. The protein is Feeding circuit activating peptides of Aplysia californica (California sea hare).